A 947-amino-acid chain; its full sequence is Protocadherin alpha-4 (947 aa).

A signal peptide spans 1 to 29 (MEFSWGSGQESQRLLLSFLLLAIWEAGNS). Cadherin domains are found at residues 30 to 133 (QIHY…PPRF), 134 to 242 (PTTQ…APVF), 243 to 350 (DRSL…VPEL), 351 to 455 (EFKS…APVF), 456 to 565 (AQPE…APTL), and 573 to 681 (SGGI…APSR). Topologically, residues 30–697 (QIHYSIPEEA…HSEASLVDVN (668 aa)) are extracellular. A disulfide bridge links cysteine 96 with cysteine 102. Residues asparagine 257 and asparagine 265 are each glycosylated (N-linked (GlcNAc...) asparagine). Threonine 438 carries O-linked (Man) threonine glycosylation. O-linked (Man) serine glycans are attached at residues serine 440 and serine 442. N-linked (GlcNAc...) asparagine glycosylation occurs at asparagine 548. A helical membrane pass occupies residues 698 to 718 (VYLIIAICAVSSLLVLTLLLY). Residues 719–947 (TALRCSTVPS…GNSTTDNSDQ (229 aa)) lie on the Cytoplasmic side of the membrane. PXXP repeat units lie at residues 734 to 737 (PPKP), 774 to 777 (PSLS), 796 to 799 (PRQP), 829 to 832 (PGGP), 870 to 873 (PGNP), and 888 to 891 (PGSP). Positions 734-891 (PPKPVMVCSS…PDKFIIPGSP (158 aa)) are 6 X 4 AA repeats of P-X-X-P. Residues 738 to 947 (VMVCSSAVGS…GNSTTDNSDQ (210 aa)) form a required for interaction with FYN region. Disordered stretches follow at residues 761–805 (GEYP…DWRY) and 824–853 (ILRAGPGGPDQQWPTVSSATPEPEAGEVSP). The interval 891-947 (PAIISIRQEPANNQIDKSDFITFGKKEETKKKKKKKKGNKTQEKKEKGNSTTDNSDQ) is disordered. Residues 906–920 (DKSDFITFGKKEETK) show a composition bias toward basic and acidic residues.

Forms homodimers in trans (molecules expressed by two different cells). Forms promiscuous heterodimers in cis (at the plasma membrane of the same cell) with other protocadherins. Interacts with FYN. As to expression, detected in brain throughout embryonic development. Detected in adult brain, in particular in cerebellum and forebrain.

The protein localises to the cell membrane. Its function is as follows. Calcium-dependent cell-adhesion protein involved in cells self-recognition and non-self discrimination. Thereby, it is involved in the establishment and maintenance of specific neuronal connections in the brain. This is Protocadherin alpha-4 from Mus musculus (Mouse).